A 512-amino-acid chain; its full sequence is Cytochrome P450 monooxygenase adrA (512 aa).

Residues 12 to 32 (FEPVSLVGLVLLSGLFLLLTA) form a helical membrane-spanning segment. N-linked (GlcNAc...) asparagine glycans are attached at residues N86, N149, and N210. C453 is a binding site for heme.

This sequence belongs to the cytochrome P450 family. Heme is required as a cofactor.

The protein resides in the membrane. It functions in the pathway secondary metabolite biosynthesis; terpenoid biosynthesis. Functionally, cytochrome P450 monooxygenase; part of the gene cluster that mediates the biosynthesis of andrastins, meroterpenoid compounds that exhibit inhibitory activity against ras farnesyltransferase, suggesting that they could be promising leads for antitumor agents. The first step of the pathway is the synthesis of 3,5-dimethylorsellinic acid (DMOA) by the polyketide synthase adrD via condensation of one acetyl-CoA starter unit with 3 malonyl-CoA units and 2 methylations. DMAO is then converted to farnesyl-DMAO by the prenyltransferase adrG. The methyltransferase adrK catalyzes the methylation of the carboxyl group of farnesyl-DMAO to farnesyl-DMAO methyl ester which is further converted to epoxyfarnesyl-DMAO methyl ester by the FAD-dependent monooxygenase adrH. The terpene cyclase adrI then catalyzes the carbon skeletal rearrangement to generate the andrastin E, the first compound in the pathway having the andrastin scaffold, with the tetracyclic ring system. The post-cyclization tailoring enzymes adrF, adrE, adrJ, and adrA, are involved in the conversion of andrastin E into andrastin A. The short chain dehydrogenase adrF is responsible for the oxidation of the C-3 a hydroxyl group of andrastin E to yield the corresponding ketone, andrastin D. The ketoreductase adrE stereoselectively reduces the carbonyl moiety to reverse the stereochemistry of the C-3 position to yield andrastin F. The acetyltransferase adrJ is the acetyltransferase that attaches the acetyl group to the C-3 hydroxyl group of andrastin F to yield andrastin C. Finally, the cytochrome P450 monooxygenase adrA catalyzes two sequential oxidation reactions of the C-23 methyl group, to generate the corresponding alcohol andrastin B, and aldehyde andrastin A. This Penicillium rubens (strain ATCC 28089 / DSM 1075 / NRRL 1951 / Wisconsin 54-1255) (Penicillium chrysogenum) protein is Cytochrome P450 monooxygenase adrA.